A 279-amino-acid polypeptide reads, in one-letter code: Threonylcarbamoyl-AMP synthase (279 aa).

The transit peptide at 1 to 55 (MSPARRCRGMRAAVAASVGLSEGPAGSRSGRLFRPPSPAPAAPGARLLRLPGSGA) directs the protein to the mitochondrion. The segment at 21 to 41 (SEGPAGSRSGRLFRPPSPAPA) is disordered. Phosphoserine is present on serine 60. Positions 67–257 (TEALRAAVAE…KFGIIRPGCA (191 aa)) constitute a YrdC-like domain.

It belongs to the SUA5 family. Interacts with RSC1A1. In terms of tissue distribution, ubiquitously expressed.

It localises to the cytoplasm. Its subcellular location is the mitochondrion. The protein localises to the cell membrane. The enzyme catalyses L-threonine + hydrogencarbonate + ATP = L-threonylcarbamoyladenylate + diphosphate + H2O. Cytoplasmic and mitochondrial threonylcarbamoyl-AMP synthase required for the formation of a threonylcarbamoyl group on adenosine at position 37 (t(6)A37) in tRNAs that read codons beginning with adenine. Catalyzes the conversion of L-threonine, HCO(3)(-)/CO(2) and ATP to give threonylcarbamoyl-AMP (TC-AMP) as the acyladenylate intermediate, with the release of diphosphate. Participates in t(6)A37 formation in cytoplasmic and mitochondrial tRNAs. May regulate the activity of some transporters. In Homo sapiens (Human), this protein is Threonylcarbamoyl-AMP synthase.